The primary structure comprises 258 residues: Putative cysteine-rich repeat secretory protein 35 (258 aa).

Residues 1–29 form the signal peptide; sequence MYSSYSLSKRLIYVPILAIQFLLVRSVSS. 2 consecutive Gnk2-homologous domains span residues 36-138 and 146-255; these read YLNH…TIKP and FKNT…LYPF.

Belongs to the cysteine-rich repeat secretory protein family.

Its subcellular location is the secreted. This is Putative cysteine-rich repeat secretory protein 35 (CRRSP35) from Arabidopsis thaliana (Mouse-ear cress).